The following is a 6995-amino-acid chain: Fibrous sheath-interacting protein 2 (6995 aa).

Disordered stretches follow at residues Glu-273–Gln-292, Asp-308–Lys-336, and Gly-351–Pro-476. A compositionally biased stretch (polar residues) spans Thr-359–Ser-396. Positions Glu-397–Arg-421 are enriched in basic and acidic residues. The segment covering Ile-424–Leu-442 has biased composition (polar residues). Ser-430 is modified (phosphoserine). The segment covering Asp-443 to Lys-452 has biased composition (basic and acidic residues). Residues Ser-453–Ser-463 are compositionally biased toward polar residues. Residues Leu-665–Lys-692 are a coiled coil. 9 disordered regions span residues Pro-1452–Thr-1472, Lys-2554–Met-2595, Thr-2699–Val-2731, Pro-3182–Thr-3270, Gly-5489–Gly-5665, Ser-5719–Lys-5740, Lys-5823–Lys-5878, Lys-5943–Leu-5996, and Ser-6973–Arg-6995. Residues Ser-2555–Ser-2565 show a composition bias toward basic and acidic residues. The span at Pro-3187–Val-3204 shows a compositional bias: polar residues. Low complexity predominate over residues Ser-3220–Ser-3231. The segment covering Cys-3232–Ala-3250 has biased composition (polar residues). Residues Ser-3255–Arg-3265 show a composition bias toward basic residues. Residues Asp-5496–Thr-5509 show a composition bias toward basic and acidic residues. 3 stretches are compositionally biased toward polar residues: residues Met-5523 to Thr-5557, Gln-5565 to Met-5625, and Val-5638 to Lys-5650. 2 stretches are compositionally biased toward basic and acidic residues: residues Ser-5719 to Thr-5738 and Gly-5829 to Ser-5877. The span at Ser-5982–Pro-5993 shows a compositional bias: polar residues. The segment covering Ser-6977–Arg-6995 has biased composition (low complexity).

In terms of assembly, may interact with AKAP4. Predominantly expressed in testis.

Its function is as follows. Plays a role in spermatogenesis. The polypeptide is Fibrous sheath-interacting protein 2 (Fsip2) (Mus musculus (Mouse)).